Reading from the N-terminus, the 188-residue chain is Elongation factor P (188 aa).

It belongs to the elongation factor P family.

The protein localises to the cytoplasm. Its pathway is protein biosynthesis; polypeptide chain elongation. In terms of biological role, involved in peptide bond synthesis. Stimulates efficient translation and peptide-bond synthesis on native or reconstituted 70S ribosomes in vitro. Probably functions indirectly by altering the affinity of the ribosome for aminoacyl-tRNA, thus increasing their reactivity as acceptors for peptidyl transferase. This Rickettsia bellii (strain OSU 85-389) protein is Elongation factor P.